The sequence spans 496 residues: Cytochrome P450 71D18 (496 aa).

The chain crosses the membrane as a helical; Signal-anchor for type II membrane protein span at residues 2–22 (ELDLLSAIIILVATYIVSLLI). Cysteine 436 serves as a coordination point for heme.

Belongs to the cytochrome P450 family. Requires heme as cofactor.

It is found in the endoplasmic reticulum membrane. The enzyme catalyses (4S)-limonene + reduced [NADPH--hemoprotein reductase] + O2 = (1S,5R)-carveol + oxidized [NADPH--hemoprotein reductase] + H2O + H(+). Functionally, hydroxylates (-)-(4S)-limonene to (-)-trans-carveol, a precursor of (-)-carvone. Fluorinated substrate analogs are hydroxylated with the same regio- and stereochemistry. The chain is Cytochrome P450 71D18 (CYP71D18) from Mentha gracilis (Gingermint).